We begin with the raw amino-acid sequence, 731 residues long: Vezatin (731 aa).

The next 2 helical transmembrane spans lie at 91–111 and 114–134; these read LATP…LLVM and TWWI…YLVI. Positions 382–414 form a coiled coil; sequence VRSLQLHLKALLNEVIILEDELEKLVCTKETQE. Disordered stretches follow at residues 570-671 and 710-731; these read PVDP…DSLQ and QTFG…IEEK. The span at 577–586 shows a compositional bias: polar residues; the sequence is ISNSEPSMNS. Residues 590–601 show a composition bias toward basic and acidic residues; the sequence is KVSKNDTEEESS. The span at 658–671 shows a compositional bias: polar residues; it reads GLTTAPPTPRDSLQ. The span at 712-721 shows a compositional bias: acidic residues; that stretch reads FGDEEEEQII. Basic and acidic residues predominate over residues 722-731; it reads EENKNKIEEK.

It belongs to the vezatin family. In terms of assembly, interacts with USH2A (via the cytoplasmic region); the interaction associates VEZT with the USH2 complex at the stereocilia base. Interacts with myosin MYO7A and the cadherin-catenins complex.

It is found in the cell membrane. It localises to the cell projection. The protein localises to the stereocilium membrane. Its subcellular location is the cell junction. The protein resides in the adherens junction. It is found in the nucleus. It localises to the cytoplasmic vesicle. The protein localises to the secretory vesicle. Its subcellular location is the acrosome. Its function is as follows. Plays a pivotal role in the establishment of adherens junctions and their maintenance in adult life. Required for morphogenesis of the preimplantation embryo, and for the implantation process. The polypeptide is Vezatin (VEZT) (Pongo abelii (Sumatran orangutan)).